A 717-amino-acid polypeptide reads, in one-letter code: HHIP-like protein 2 (717 aa).

A signal peptide spans 1-40 (MLGKHTSPHTVPGHRAPWLSPGIFCLGLPFLLGWVGLLQG). 4 disulfide bridges follow: cysteine 203/cysteine 545, cysteine 207/cysteine 551, cysteine 423/cysteine 441, and cysteine 508/cysteine 607. The disordered stretch occupies residues 642–717 (ARKASNATFT…MRQAAGRSHP (76 aa)). Over residues 646–662 (SNATFTSSSDRVASQKG) the composition is skewed to polar residues. The N-linked (GlcNAc...) asparagine glycan is linked to asparagine 647. A compositionally biased stretch (basic residues) spans 672–687 (SSKKTFRRPGTKKKSR).

It belongs to the HHIP family.

It is found in the secreted. This Mus musculus (Mouse) protein is HHIP-like protein 2 (Hhipl2).